The primary structure comprises 1450 residues: Phospholipase B1, membrane-associated (1450 aa).

The signal sequence occupies residues 1 to 27 (MESWPGVSLVGLLLLLLLGQGPSQIHG). Residues 28 to 1422 (SSGENTSQPQ…KAKENSNTLY (1395 aa)) are Extracellular-facing. Residues Asn-32, Asn-45, and Asn-179 are each glycosylated (N-linked (GlcNAc...) asparagine). Tandem repeats lie at residues 41–351 (RTLK…YRNS), 366–711 (MKEG…TKNS), and 712–1058 (NLGH…FRNS). Residues 41-1407 (RTLKNFSFPC…NPFLYTVRNS (1367 aa)) are 4 X 308-326 AA approximate repeats. Active-site residues include Ser-404, Asp-518, and His-659. Asn-699 carries an N-linked (GlcNAc...) asparagine glycan. Over residues 708 to 720 (TKNSNLGHGTSMS) the composition is skewed to polar residues. The interval 708-734 (TKNSNLGHGTSMSCEEKAPSASPPTSV) is disordered. N-linked (GlcNAc...) asparagine glycosylation is found at Asn-787, Asn-801, Asn-844, Asn-880, Asn-926, Asn-1059, Asn-1226, Asn-1280, Asn-1383, and Asn-1387. Repeat unit 4 spans residues 1068-1407 (IENWGSDFLC…NPFLYTVRNS (340 aa)). The segment at 1408–1450 (QILLDKAKENSNTLYWAVPVAAVGGLVVGILGMMLWRTVRLVQ) is necessary for membrane localization. The chain crosses the membrane as a helical span at residues 1423–1443 (WAVPVAAVGGLVVGILGMMLW). At 1444–1450 (RTVRLVQ) the chain is on the cytoplasmic side.

This sequence belongs to the 'GDSL' lipolytic enzyme family. Phospholipase B1 subfamily. Post-translationally, undergoes proteolytic cleavage in the ileum. Expressed in the ileum mucosa, Paneth cells spermatocytes, spermatids and sperm (at protein level). Expressed in the ileum, jejunum, esophagus and testis.

It localises to the apical cell membrane. It catalyses the reaction a 1,2-diacyl-sn-glycero-3-phosphocholine + H2O = a 1-acyl-sn-glycero-3-phosphocholine + a fatty acid + H(+). It carries out the reaction a 1-O-alkyl-2-acyl-sn-glycero-3-phosphocholine + H2O = a 1-O-alkyl-sn-glycero-3-phosphocholine + a fatty acid + H(+). The catalysed reaction is a 1-acyl-sn-glycero-3-phosphocholine + H2O = sn-glycerol 3-phosphocholine + a fatty acid + H(+). The enzyme catalyses a triacylglycerol + H2O = a diacylglycerol + a fatty acid + H(+). It catalyses the reaction 1,2-dihexadecanoyl-sn-glycero-3-phosphocholine + H2O = 1-hexadecanoyl-sn-glycero-3-phosphocholine + hexadecanoate + H(+). It carries out the reaction 1-hexadecanoyl-2-(9Z-octadecenoyl)-sn-glycero-3-phosphocholine + H2O = 1-hexadecanoyl-sn-glycero-3-phosphocholine + (9Z)-octadecenoate + H(+). The catalysed reaction is 1,2-di-(9Z-octadecenoyl)-sn-glycero-3-phosphocholine + H2O = 1-(9Z-octadecenoyl)-sn-glycero-3-phosphocholine + (9Z)-octadecenoate + H(+). The enzyme catalyses 1-hexadecanoyl-2-(9Z,12Z-octadecadienoyl)-sn-glycero-3-phosphocholine + H2O = (9Z,12Z)-octadecadienoate + 1-hexadecanoyl-sn-glycero-3-phosphocholine + H(+). It catalyses the reaction 1-hexadecanoyl-2-(9Z,12Z-octadecadienoyl)-sn-glycero-3-phosphocholine + H2O = 2-(9Z,12Z-octadecadienoyl)-sn-glycero-3-phosphocholine + hexadecanoate + H(+). It carries out the reaction 1-hexadecanoyl-2-(9Z-octadecenoyl)-sn-glycero-3-phosphoethanolamine + H2O = 1-hexadecanoyl-sn-glycero-3-phosphoethanolamine + (9Z)-octadecenoate + H(+). The catalysed reaction is 1-hexadecanoyl-2-(9Z-octadecenoyl)-sn-glycero-3-phospho-(1'-sn-glycerol) + H2O = 1-hexadecanoyl-sn-glycero-3-phospho-(1'-sn-glycerol) + (9Z)-octadecenoate + H(+). The enzyme catalyses 1,2-dihexadecanoyl-sn-glycero-3-phosphocholine + 2 H2O = sn-glycerol 3-phosphocholine + 2 hexadecanoate + 2 H(+). It catalyses the reaction 1-O-hexadecyl-2-(9Z)-octadecenoyl-sn-glycero-3-phosphocholine + H2O = 1-O-hexadecyl-sn-glycero-3-phosphocholine + (9Z)-octadecenoate + H(+). It carries out the reaction 1-hexadecanoyl-sn-glycero-3-phosphocholine + H2O = sn-glycerol 3-phosphocholine + hexadecanoate + H(+). The catalysed reaction is 1,2,3-tri-(9Z-octadecenoyl)-glycerol + H2O = di-(9Z)-octadecenoylglycerol + (9Z)-octadecenoate + H(+). The enzyme catalyses 1-hexadecanoyl-2-(9Z)-octadecenoyl-3-octadecanoyl-sn-glycerol + H2O = 1-hexadecanoyl-2-(9Z-octadecenoyl)-sn-glycerol + octadecanoate + H(+). It catalyses the reaction 1,3-dihexadecanoyl-2-(9Z-octadecenoyl)glycerol + H2O = 1,3-dihexadecanoylglycerol + (9Z)-octadecenoate + H(+). It carries out the reaction 1,3-dihexadecanoyl-2-(9Z-octadecenoyl)glycerol + H2O = 1-hexadecanoyl-2-(9Z-octadecenoyl)-glycerol + hexadecanoate + H(+). The catalysed reaction is 1-hexadecanoyl-2-(9Z)-octadecenoyl-3-octadecanoyl-sn-glycerol + H2O = 1-hexadecanoyl-3-octadecanoyl-sn-glycerol + (9Z)-octadecenoate + H(+). The enzyme catalyses 1-hexadecanoyl-2-(9Z)-octadecenoyl-3-octadecanoyl-sn-glycerol + H2O = 2-(9Z-octadecenoyl)-3-octadecanoyl-sn-glycerol + hexadecanoate + H(+). It catalyses the reaction 1-octadecanoyl-2-(9Z,12Z)-octadecadienoyl-sn-glycerol + H2O = 1-octadecanoyl-sn-glycerol + (9Z,12Z)-octadecadienoate + H(+). It carries out the reaction 1,2-di-(9Z-octadecenoyl)-sn-glycerol + H2O = 1-(9Z-octadecenoyl)-sn-glycerol + (9Z)-octadecenoate + H(+). The catalysed reaction is 2,3-di-(9Z)-octadecenoyl-sn-glycerol + H2O = 3-(9Z-octadecenoyl)-sn-glycerol + (9Z)-octadecenoate + H(+). The enzyme catalyses 1,3-di-(9Z-octadecenoyl)-glycerol + H2O = 1-(9Z-octadecenoyl)-glycerol + (9Z)-octadecenoate + H(+). It catalyses the reaction 1-(9Z-octadecenoyl)-glycerol + H2O = glycerol + (9Z)-octadecenoate + H(+). It carries out the reaction 2-(9Z-octadecenoyl)-glycerol + H2O = glycerol + (9Z)-octadecenoate + H(+). Its activity is regulated as follows. Up-regulated by bile acids such as deoxycholate. Inhibited by diisopropyl fluorophosphate. In terms of biological role, calcium-independent membrane-associated phospholipase that catalyzes complete diacylation of phospholipids by hydrolyzing both sn-1 and sn-2 fatty acyl chains attached to the glycerol backbone (phospholipase B activity). Has dual phospholipase and lysophospholipase activities toward diacylphospholipids. Preferentially cleaves sn-2 ester bonds over sn-1 bonds. Acts as a lipase toward glycerolipid substrates. Hydrolyzes fatty acyl chains of diacylglycerols with preference for the sn-2 position and of triacylglycerols with not positional selectivity. May also hydrolyze long chain retinyl esters such as retinyl palmitate. May contribute to digestion of dietary phospholipids, glycerolipids and retinoids, facilitating lipid absorption at the brush border. This chain is Phospholipase B1, membrane-associated (Plb1), found in Rattus norvegicus (Rat).